The chain runs to 64 residues: Phi-buthitoxin-Hj1a (64 aa).

The signal sequence occupies residues 1–18 (MNSFVVVLLLFIAILCNA). Disulfide bonds link cysteine 29–cysteine 43, cysteine 36–cysteine 49, and cysteine 42–cysteine 58.

Belongs to the scorpion calcin-like family. In terms of tissue distribution, expressed by the venom gland.

The protein resides in the secreted. In terms of biological role, may increase intracellular calcium release through the activation of nuclear inositol 1,4,5-trisphosphate receptors (ITPR) of cardiomyocytes, thereby causing an increase in the contraction frequency of these cells. The chain is Phi-buthitoxin-Hj1a from Hottentotta judaicus (Black scorpion).